Here is a 377-residue protein sequence, read N- to C-terminus: Glutamate 5-kinase (377 aa).

Lys22 lines the ATP pocket. Substrate is bound by residues Ser62, Asp149, and Asn161. ATP is bound by residues 181-182 (TD) and 223-229 (TGGMVTK). Positions 285–363 (RGVLVADSGA…AQLRRLLGEE (79 aa)) constitute a PUA domain.

It belongs to the glutamate 5-kinase family.

Its subcellular location is the cytoplasm. The catalysed reaction is L-glutamate + ATP = L-glutamyl 5-phosphate + ADP. The protein operates within amino-acid biosynthesis; L-proline biosynthesis; L-glutamate 5-semialdehyde from L-glutamate: step 1/2. Catalyzes the transfer of a phosphate group to glutamate to form L-glutamate 5-phosphate. This is Glutamate 5-kinase from Bifidobacterium animalis subsp. lactis (strain AD011).